Consider the following 586-residue polypeptide: Proline--tRNA ligase (586 aa).

This sequence belongs to the class-II aminoacyl-tRNA synthetase family. ProS type 1 subfamily. In terms of assembly, homodimer.

The protein resides in the cytoplasm. The enzyme catalyses tRNA(Pro) + L-proline + ATP = L-prolyl-tRNA(Pro) + AMP + diphosphate. Its function is as follows. Catalyzes the attachment of proline to tRNA(Pro) in a two-step reaction: proline is first activated by ATP to form Pro-AMP and then transferred to the acceptor end of tRNA(Pro). As ProRS can inadvertently accommodate and process non-cognate amino acids such as alanine and cysteine, to avoid such errors it has two additional distinct editing activities against alanine. One activity is designated as 'pretransfer' editing and involves the tRNA(Pro)-independent hydrolysis of activated Ala-AMP. The other activity is designated 'posttransfer' editing and involves deacylation of mischarged Ala-tRNA(Pro). The misacylated Cys-tRNA(Pro) is not edited by ProRS. The chain is Proline--tRNA ligase from Leptospira biflexa serovar Patoc (strain Patoc 1 / Ames).